Consider the following 410-residue polypeptide: Cysteine desulfurase IscS (410 aa).

Pyridoxal 5'-phosphate is bound by residues 79–80 (AT), Asn-159, Gln-187, and 207–209 (SGH). Lys-210 carries the N6-(pyridoxal phosphate)lysine modification. Thr-248 serves as a coordination point for pyridoxal 5'-phosphate. The Cysteine persulfide intermediate role is filled by Cys-334. [2Fe-2S] cluster is bound at residue Cys-334.

Belongs to the class-V pyridoxal-phosphate-dependent aminotransferase family. NifS/IscS subfamily. Homodimer. Forms a heterotetramer with IscU, interacts with other sulfur acceptors. The cofactor is pyridoxal 5'-phosphate.

Its subcellular location is the cytoplasm. The catalysed reaction is (sulfur carrier)-H + L-cysteine = (sulfur carrier)-SH + L-alanine. Its pathway is cofactor biosynthesis; iron-sulfur cluster biosynthesis. Master enzyme that delivers sulfur to a number of partners involved in Fe-S cluster assembly, tRNA modification or cofactor biosynthesis. Catalyzes the removal of elemental sulfur atoms from cysteine to produce alanine. Functions as a sulfur delivery protein for Fe-S cluster synthesis onto IscU, an Fe-S scaffold assembly protein, as well as other S acceptor proteins. The chain is Cysteine desulfurase IscS from Ehrlichia chaffeensis (strain ATCC CRL-10679 / Arkansas).